We begin with the raw amino-acid sequence, 355 residues long: uncharacterized protein (355 aa).

This sequence belongs to the carbohydrate kinase PfkB family.

This is an uncharacterized protein from Dictyostelium discoideum (Social amoeba).